A 352-amino-acid chain; its full sequence is Transcriptional regulatory protein AlgP (352 aa).

Positions 128–352 (KALESRKAKP…SNGAAPTSAS (225 aa)) are disordered. A compositionally biased stretch (low complexity) spans 138-341 (ATKPAAKAAA…SSAASATPAA (204 aa)).

Its function is as follows. The promoter for a critical alginate biosynthetic gene, AlgD, encoding GDP-mannose dehydrogenase, is activated only under conditions reminiscent of the cystic fibrosis lung (i.e. under high osmolarity), and at least two regulatory genes, AlgP and AlgQ, have been implicated in this activation process. The chain is Transcriptional regulatory protein AlgP (algP) from Pseudomonas aeruginosa (strain ATCC 15692 / DSM 22644 / CIP 104116 / JCM 14847 / LMG 12228 / 1C / PRS 101 / PAO1).